We begin with the raw amino-acid sequence, 68 residues long: MPKLKTKSAVKKRFSLSSSGKLKVTQAGKRHFMRRRTKKQLRNLRGTTTLIGQDAKNIIKYLMPYGVQ.

Belongs to the bacterial ribosomal protein bL35 family.

This chain is Large ribosomal subunit protein bL35, found in Orientia tsutsugamushi (strain Ikeda) (Rickettsia tsutsugamushi).